A 414-amino-acid polypeptide reads, in one-letter code: Enolase (414 aa).

Residue Q156 coordinates (2R)-2-phosphoglycerate. E200 (proton donor) is an active-site residue. Mg(2+) contacts are provided by D236, E281, and D308. (2R)-2-phosphoglycerate is bound by residues K333, R362, S363, and K384. The active-site Proton acceptor is the K333.

Belongs to the enolase family. It depends on Mg(2+) as a cofactor.

The protein localises to the cytoplasm. It is found in the secreted. It localises to the cell surface. The catalysed reaction is (2R)-2-phosphoglycerate = phosphoenolpyruvate + H2O. Its pathway is carbohydrate degradation; glycolysis; pyruvate from D-glyceraldehyde 3-phosphate: step 4/5. In terms of biological role, catalyzes the reversible conversion of 2-phosphoglycerate (2-PG) into phosphoenolpyruvate (PEP). It is essential for the degradation of carbohydrates via glycolysis. This is Enolase from Methanosphaera stadtmanae (strain ATCC 43021 / DSM 3091 / JCM 11832 / MCB-3).